Here is a 145-residue protein sequence, read N- to C-terminus: UPF0763 protein WS1752 (145 aa).

It belongs to the UPF0763 family.

In Wolinella succinogenes (strain ATCC 29543 / DSM 1740 / CCUG 13145 / JCM 31913 / LMG 7466 / NCTC 11488 / FDC 602W) (Vibrio succinogenes), this protein is UPF0763 protein WS1752.